The following is a 207-amino-acid chain: Thiamine-phosphate synthase (207 aa).

4-amino-2-methyl-5-(diphosphooxymethyl)pyrimidine is bound by residues 41-45 (QLRLK) and N73. Mg(2+)-binding residues include D74 and D93. T111 contacts 4-amino-2-methyl-5-(diphosphooxymethyl)pyrimidine. 138–140 (TKT) contacts 2-[(2R,5Z)-2-carboxy-4-methylthiazol-5(2H)-ylidene]ethyl phosphate. K141 is a binding site for 4-amino-2-methyl-5-(diphosphooxymethyl)pyrimidine. G168 contributes to the 2-[(2R,5Z)-2-carboxy-4-methylthiazol-5(2H)-ylidene]ethyl phosphate binding site.

The protein belongs to the thiamine-phosphate synthase family. Requires Mg(2+) as cofactor.

It carries out the reaction 2-[(2R,5Z)-2-carboxy-4-methylthiazol-5(2H)-ylidene]ethyl phosphate + 4-amino-2-methyl-5-(diphosphooxymethyl)pyrimidine + 2 H(+) = thiamine phosphate + CO2 + diphosphate. The enzyme catalyses 2-(2-carboxy-4-methylthiazol-5-yl)ethyl phosphate + 4-amino-2-methyl-5-(diphosphooxymethyl)pyrimidine + 2 H(+) = thiamine phosphate + CO2 + diphosphate. It catalyses the reaction 4-methyl-5-(2-phosphooxyethyl)-thiazole + 4-amino-2-methyl-5-(diphosphooxymethyl)pyrimidine + H(+) = thiamine phosphate + diphosphate. Its pathway is cofactor biosynthesis; thiamine diphosphate biosynthesis; thiamine phosphate from 4-amino-2-methyl-5-diphosphomethylpyrimidine and 4-methyl-5-(2-phosphoethyl)-thiazole: step 1/1. Condenses 4-methyl-5-(beta-hydroxyethyl)thiazole monophosphate (THZ-P) and 2-methyl-4-amino-5-hydroxymethyl pyrimidine pyrophosphate (HMP-PP) to form thiamine monophosphate (TMP). The polypeptide is Thiamine-phosphate synthase (Pelagibacter ubique (strain HTCC1062)).